Consider the following 345-residue polypeptide: Golgi-associated RAB2 interactor protein 1B (345 aa).

Disordered regions lie at residues 222–241 (CSPS…SQPS) and 271–299 (SRSS…PCTR). Basic and acidic residues predominate over residues 275–285 (KKTENKKDSSG).

Belongs to the GARIN family.

The protein resides in the golgi apparatus. RAB2B effector protein required for accurate acrosome formation and normal male fertility. In complex with RAB2A/RAB2B, seems to suppress excessive vesicle trafficking during acrosome formation. The chain is Golgi-associated RAB2 interactor protein 1B (GARIN1B) from Bos taurus (Bovine).